Here is a 71-residue protein sequence, read N- to C-terminus: Small ribosomal subunit protein bS21 (71 aa).

Belongs to the bacterial ribosomal protein bS21 family.

In Pseudoalteromonas atlantica (strain T6c / ATCC BAA-1087), this protein is Small ribosomal subunit protein bS21.